Reading from the N-terminus, the 499-residue chain is Proline--tRNA ligase (499 aa).

Residues 1–17 (MTKDGGKKDNQGQDKKA) show a composition bias toward basic and acidic residues. Positions 1 to 21 (MTKDGGKKDNQGQDKKAQQYG) are disordered.

This sequence belongs to the class-II aminoacyl-tRNA synthetase family. ProS type 3 subfamily. Homodimer.

It localises to the cytoplasm. The catalysed reaction is tRNA(Pro) + L-proline + ATP = L-prolyl-tRNA(Pro) + AMP + diphosphate. Catalyzes the attachment of proline to tRNA(Pro) in a two-step reaction: proline is first activated by ATP to form Pro-AMP and then transferred to the acceptor end of tRNA(Pro). Can inadvertently accommodate and process cysteine. This Deinococcus radiodurans (strain ATCC 13939 / DSM 20539 / JCM 16871 / CCUG 27074 / LMG 4051 / NBRC 15346 / NCIMB 9279 / VKM B-1422 / R1) protein is Proline--tRNA ligase (proS).